The following is a 379-amino-acid chain: V-type proton ATPase subunit S1 (379 aa).

Residues 1-17 (MLWKSLIALCVIGAAVA) form the signal peptide. The Lumenal portion of the chain corresponds to 18–333 (EQTPVFLWGA…WDCVGFVTPG (316 aa)). N-linked (GlcNAc...) asparagine glycosylation is found at Asn225 and Asn284. Residues Cys282 and Cys326 are joined by a disulfide bond. The helical transmembrane segment at 334 to 354 (ILMGLFVVALLLVIMFVGVCW) threads the bilayer. The Cytoplasmic segment spans residues 355-379 (MMDINTMDRFDDPKGKTITINAAAE).

Belongs to the vacuolar ATPase subunit S1 family. Accessory component of the multisubunit proton-transporting vacuolar (V)-ATPase protein pump. May interact with ATP6AP2.

It is found in the endoplasmic reticulum membrane. Functionally, accessory subunit of the proton-transporting vacuolar (V)-ATPase protein pump, which is required for luminal acidification of secretory vesicles. The chain is V-type proton ATPase subunit S1 from Drosophila melanogaster (Fruit fly).